The primary structure comprises 329 residues: Glutamyl-Q tRNA(Asp) synthetase (329 aa).

L-glutamate-binding positions include 8–12 and glutamate 44; that span reads RLAPS. The short motif at 11–21 is the 'HIGH' region element; the sequence is PSPTGAQHLGN. The Zn(2+) site is built by cysteine 100, cysteine 102, tyrosine 129, and cysteine 133. L-glutamate is bound by residues tyrosine 196 and arginine 214. Positions 252-256 match the 'KMSKS' region motif; that stretch reads RLAKR. Lysine 255 lines the ATP pocket.

This sequence belongs to the class-I aminoacyl-tRNA synthetase family. GluQ subfamily. It depends on Zn(2+) as a cofactor.

In terms of biological role, catalyzes the tRNA-independent activation of glutamate in presence of ATP and the subsequent transfer of glutamate onto a tRNA(Asp). Glutamate is transferred on the 2-amino-5-(4,5-dihydroxy-2-cyclopenten-1-yl) moiety of the queuosine in the wobble position of the QUC anticodon. The sequence is that of Glutamyl-Q tRNA(Asp) synthetase from Rhodopirellula baltica (strain DSM 10527 / NCIMB 13988 / SH1).